The chain runs to 106 residues: Large ribosomal subunit protein bL21 (106 aa).

Belongs to the bacterial ribosomal protein bL21 family. Part of the 50S ribosomal subunit. Contacts protein L20.

This protein binds to 23S rRNA in the presence of protein L20. The protein is Large ribosomal subunit protein bL21 of Xanthomonas campestris pv. campestris (strain ATCC 33913 / DSM 3586 / NCPPB 528 / LMG 568 / P 25).